We begin with the raw amino-acid sequence, 326 residues long: GATA zinc finger domain-containing protein 21 (326 aa).

Disordered regions lie at residues 1 to 102 and 145 to 238; these read MFRN…NNNN and QNQS…TPER. Composition is skewed to low complexity over residues 17–102 and 148–164; these read NTNL…NNNN and SSSS…GSSA. Residues 165 to 189 are compositionally biased toward polar residues; sequence LNSINNNNYSPTTSSLNRVRNQYNQ. Over residues 193 to 218 the composition is skewed to acidic residues; sequence DEEDDDYDNGAEDGFDYDGDDNEDGS. Residues 239-266 form a GATA-type zinc finger; the sequence is CSNCKITHSSYWRRITVNGQKLDFCNAC. Positions 277 to 326 are disordered; it reads IKESKQRHSIQNIMNQNQEEEEEEREEEEEEEEEEDEEFETLEEEEEDDE. The span at 294–326 shows a compositional bias: acidic residues; that stretch reads QEEEEEEREEEEEEEEEEDEEFETLEEEEEDDE.

In Dictyostelium discoideum (Social amoeba), this protein is GATA zinc finger domain-containing protein 21 (gtaU).